The following is a 555-amino-acid chain: Potassium-transporting ATPase potassium-binding subunit (555 aa).

A run of 10 helical transmembrane segments spans residues 2–22 (IWVA…PTGI), 60–80 (QYAL…YFIF), 130–150 (IGIT…VMAF), 173–193 (VFLP…VPQT), 246–266 (MSNI…PFTY), 278–298 (ILFV…TTSE), 374–394 (AGFV…GLMV), 412–432 (LIAV…ALAL), 483–503 (LVMF…AASL), and 525–545 (GIFI…MLVL).

This sequence belongs to the KdpA family. As to quaternary structure, the system is composed of three essential subunits: KdpA, KdpB and KdpC.

The protein localises to the cell membrane. In terms of biological role, part of the high-affinity ATP-driven potassium transport (or Kdp) system, which catalyzes the hydrolysis of ATP coupled with the electrogenic transport of potassium into the cytoplasm. This subunit binds the extracellular potassium ions and delivers the ions to the membrane domain of KdpB through an intramembrane tunnel. The polypeptide is Potassium-transporting ATPase potassium-binding subunit (Bacillus cereus (strain AH187)).